The chain runs to 163 residues: Adenosine 5'-monophosphoramidase HINT2 (163 aa).

The N-terminal 17 residues, 1–17 (MAAAVVLAAGLCVARRA), are a transit peptide targeting the mitochondrion. Positions 55 to 163 (IFSRILDRSL…GGRQLQWPPG (109 aa)) constitute an HIT domain. Residues Ser63 and Asp80 each coordinate AMP. Lys119 is subject to N6-acetyllysine. Asn136 contributes to the AMP binding site. Lys139 carries the post-translational modification N6-acetyllysine. Residues 142 to 145 (AQSV) and 149 to 151 (HIH) each bind AMP. The Histidine triad motif signature appears at 147–151 (HLHIH). Catalysis depends on His149, which acts as the Tele-AMP-histidine intermediate.

This sequence belongs to the HINT family.

It is found in the mitochondrion. It catalyses the reaction adenosine 5'-phosphoramidate + H2O = AMP + NH4(+). Functionally, exhibits adenosine 5'-monophosphoramidase activity, hydrolyzing purine nucleotide phosphoramidates with a single phosphate group such as adenosine 5'monophosphoramidate (AMP-NH2) to yield AMP and NH2. Hydrolyzes adenosine 5'-O-p-nitrophenylphosphoramidate (AMP-pNA). May be involved in steroid biosynthesis. May play a role in apoptosis. The polypeptide is Adenosine 5'-monophosphoramidase HINT2 (Bos taurus (Bovine)).